Reading from the N-terminus, the 191-residue chain is Fe/S biogenesis protein NfuA (191 aa).

Positions 149 and 152 each coordinate [4Fe-4S] cluster.

This sequence belongs to the NfuA family. Homodimer. The cofactor is [4Fe-4S] cluster.

In terms of biological role, involved in iron-sulfur cluster biogenesis. Binds a 4Fe-4S cluster, can transfer this cluster to apoproteins, and thereby intervenes in the maturation of Fe/S proteins. Could also act as a scaffold/chaperone for damaged Fe/S proteins. This chain is Fe/S biogenesis protein NfuA, found in Erwinia tasmaniensis (strain DSM 17950 / CFBP 7177 / CIP 109463 / NCPPB 4357 / Et1/99).